The following is a 528-amino-acid chain: (R)-citramalate synthase (528 aa).

Positions 5-271 (VYIYDTTLRD…IPQENLKKLT (267 aa)) constitute a Pyruvate carboxyltransferase domain.

It belongs to the alpha-IPM synthase/homocitrate synthase family.

The enzyme catalyses pyruvate + acetyl-CoA + H2O = (3R)-citramalate + CoA + H(+). It functions in the pathway amino-acid biosynthesis; L-isoleucine biosynthesis; 2-oxobutanoate from pyruvate: step 1/3. Functionally, catalyzes the condensation of pyruvate and acetyl-coenzyme A to form (R)-citramalate. This Aquifex aeolicus (strain VF5) protein is (R)-citramalate synthase.